A 642-amino-acid chain; its full sequence is Kelch-like protein 17 (642 aa).

Residues 1 to 53 (MQPRSERPAGRTQSPEHGSPGPGPEAPPPPPPQPPAPEAERTRPRQARPAAPM) are disordered. Pro residues predominate over residues 21–37 (GPGPEAPPPPPPQPPAP). A BTB domain is found at 92-159 (CDIVLHVAAK…AYTAEIVVGE (68 aa)). The BACK domain occupies 194–296 (CLGIRGFADA…SRDFLLGHVD (103 aa)). An interaction with F-actin region spans residues 289 to 641 (DFLLGHVDAE…SPTLSVSSTS (353 aa)). Kelch repeat units lie at residues 343-389 (VLFA…AVGN), 390-436 (RLYA…ALHG), 438-483 (LYSA…TLDG), 484-530 (NLYA…VLEG), 532-577 (LYVA…AMDG), and 578-624 (WLYA…VLEL). The interaction with PDZK1 stretch occupies residues 640–642 (TSL).

As to quaternary structure, interacts with F-actin; the interaction disrupts the F-actin structures and leads to marked changes of neuronal morphology. Component of a complex, composed of PDZK1, SYNGAP1, KLHL17 and NMDA receptors. Interacts directly with PDZK1 (via PDZ1 domain); the interaction is important for integrity of actin cytoskeleton structures in neurons. Interacts with DLG4 and SYNGAP1. Interacts (via kelch repeats) with GRIK2 (via C-terminus); the interaction targets GRIK2 for degradation via ubiquitin-proteasome pathway. Interacts with GRIK1. Interacts with (via BTB domain) CUL3; the interaction regulates surface GRIK2 expression.

It localises to the postsynaptic density. It is found in the synapse. The protein operates within protein modification; protein ubiquitination. In terms of biological role, substrate-recognition component of some cullin-RING-based BCR (BTB-CUL3-RBX1) E3 ubiquitin-protein ligase complexes. The BCR(KLHL17) complex mediates the ubiquitination and subsequent degradation of GLUR6. May play a role in the actin-based neuronal function. This Homo sapiens (Human) protein is Kelch-like protein 17 (KLHL17).